Consider the following 230-residue polypeptide: Orotidine 5'-phosphate decarboxylase (230 aa).

Residues aspartate 11, lysine 34, 61 to 70 (DLKLHDIPNT), threonine 117, arginine 179, glutamine 188, glycine 208, and arginine 209 contribute to the substrate site. Lysine 63 functions as the Proton donor in the catalytic mechanism.

Belongs to the OMP decarboxylase family. Type 1 subfamily. In terms of assembly, homodimer.

It carries out the reaction orotidine 5'-phosphate + H(+) = UMP + CO2. It functions in the pathway pyrimidine metabolism; UMP biosynthesis via de novo pathway; UMP from orotate: step 2/2. Catalyzes the decarboxylation of orotidine 5'-monophosphate (OMP) to uridine 5'-monophosphate (UMP). This is Orotidine 5'-phosphate decarboxylase from Streptococcus pyogenes serotype M49 (strain NZ131).